Reading from the N-terminus, the 121-residue chain is Chromosome transmission fidelity protein 8 homolog (121 aa).

Belongs to the CTF8 family. In terms of assembly, component of the CTF18-RFC complex, which consists of CTF18, CTF8, DSCC1, RFC2, RFC3, RFC4 and RFC5. The CTF18-RFC complex does not interact with the Rad9/Rad1/Hus1 complex. The CTF18-RFC complex interacts with POLH. CTF18/CTF8/DSCC1 associate with PCNA. CTF8 exists as a dimer with DSCC1.

The protein localises to the nucleus. In terms of biological role, chromosome cohesion factor involved in sister chromatid cohesion and fidelity of chromosome transmission. Component of one of the cell nuclear antigen loader complexes, CTF18-replication factor C (CTF18-RFC), which consists of CTF18, CTF8, DSCC1, RFC2, RFC3, RFC4 and RFC5. The CTF18-RFC complex binds to single-stranded and primed DNAs and has weak ATPase activity that is stimulated the presence of primed DNA, replication protein A (RPA) and proliferating cell nuclear antigen (PCNA). The CTF18-RFC complex catalyzes the ATP-dependent loading of PCNA onto primed and gapped DNA. It also interacts with and stimulates POLH, which is suggestive of a protein network that coordinates DNA repair, recombination and chromosome cohesion reactions with replication fork progression. The sequence is that of Chromosome transmission fidelity protein 8 homolog from Homo sapiens (Human).